A 177-amino-acid chain; its full sequence is Antigen TpF1 (177 aa).

It belongs to the Dps family. In terms of assembly, homodecamer; either linked or stabilized by disulfide bonds.

In terms of biological role, may play an important structural role in the outer membrane. In Treponema pallidum (strain Nichols), this protein is Antigen TpF1 (tpf1).